The sequence spans 172 residues: 3-hydroxydecanoyl-[acyl-carrier-protein] dehydratase (172 aa).

The active site involves His71.

It belongs to the thioester dehydratase family. FabA subfamily. In terms of assembly, homodimer.

It is found in the cytoplasm. The enzyme catalyses a (3R)-hydroxyacyl-[ACP] = a (2E)-enoyl-[ACP] + H2O. It catalyses the reaction (3R)-hydroxydecanoyl-[ACP] = (2E)-decenoyl-[ACP] + H2O. The catalysed reaction is (2E)-decenoyl-[ACP] = (3Z)-decenoyl-[ACP]. The protein operates within lipid metabolism; fatty acid biosynthesis. Its function is as follows. Necessary for the introduction of cis unsaturation into fatty acids. Catalyzes the dehydration of (3R)-3-hydroxydecanoyl-ACP to E-(2)-decenoyl-ACP and then its isomerization to Z-(3)-decenoyl-ACP. Can catalyze the dehydratase reaction for beta-hydroxyacyl-ACPs with saturated chain lengths up to 16:0, being most active on intermediate chain length. This chain is 3-hydroxydecanoyl-[acyl-carrier-protein] dehydratase, found in Pectobacterium carotovorum subsp. carotovorum (strain PC1).